Reading from the N-terminus, the 610-residue chain is V-type proton ATPase catalytic subunit A (610 aa).

245 to 252 lines the ATP pocket; that stretch reads GAFGCGKT.

The protein belongs to the ATPase alpha/beta chains family. V-ATPase is a heteromultimeric enzyme composed of a peripheral catalytic V1 complex (main components: subunits A, B, C, D, E, and F) attached to an integral membrane V0 proton pore complex (main component: the proteolipid protein).

It catalyses the reaction ATP + H2O + 4 H(+)(in) = ADP + phosphate + 5 H(+)(out). Its function is as follows. Catalytic subunit of the peripheral V1 complex of vacuolar ATPase. V-ATPase vacuolar ATPase is responsible for acidifying a variety of intracellular compartments in eukaryotic cells. In Trypanosoma congolense, this protein is V-type proton ATPase catalytic subunit A.